Reading from the N-terminus, the 647-residue chain is Pre-mRNA-splicing factor SLU7 (647 aa).

The span at 1–19 (MASYKQNLPPSALIKQQVN) shows a compositional bias: polar residues. The interval 1–44 (MASYKQNLPPSALIKQQVNVADKKSKAEVQRDRQLEEDRKAGTA) is disordered. The span at 21–41 (ADKKSKAEVQRDRQLEEDRKA) shows a compositional bias: basic and acidic residues. The CCHC-type zinc finger occupies 113 to 130 (GACENCGAMGHQKRDCFD). Disordered regions lie at residues 193–212 (HEMK…APKD) and 465–620 (EVKE…KEME). The segment covering 465 to 479 (EVKEEKEKEDSIKDE) has biased composition (basic and acidic residues). The span at 480–491 (VAEENSDNDNDE) shows a compositional bias: acidic residues. Basic and acidic residues predominate over residues 513–533 (EKEREKERLIEKERRERDQRR). Residues 534-555 (RDKKREKRERKKAKLGKRKRRH) show a composition bias toward basic residues. Positions 588–606 (EKAEGMKAAREGDRGRKYN) are enriched in basic and acidic residues.

The protein belongs to the SLU7 family.

Its subcellular location is the nucleus. In terms of biological role, participates in the second catalytic step of pre-mRNA splicing, when the free hydroxyl group of exon I attacks the 3'-splice site to generate spliced mRNA and the excised lariat intron. The protein is Pre-mRNA-splicing factor SLU7 of Caenorhabditis elegans.